The sequence spans 415 residues: MAEPPRSCDCFVSLPPGSKEDYVIFGKNSDRPRDEVQEVVYFPASSHPPASTVECTYISIPQVEHTNAVVLSRPAWLWGAEMGANEHGVCVGNEAVWTKEPVNPEEALLGMDLVRLGLERGDSARAALNVITALLEQFGQGGACRETSEPFSYHNTFLLVDRQEAWVLETAGKLWAAQKVTEGVKNISNQLTIDFEISAEHPDLRSVAQAQGWWSGEGDFSFTAVFSPDHPPARMEMAKQRYRGGTALLQQHNGSVTAEVMMSILRDKASGICMDSEGFRTTGSMVSILPRNPNMPCVHFLTATPDPSRSVFKPFIFSESVRPVSMVMSPQYGPGDPVRTLPRFQHQVDRKHELYKAHQMANTSSDAGVSLQDTMRYLESQCLEEIEAMLRGEVQGQELGDLFFDCVDAEIKFYQ.

Cysteine 8 is a catalytic residue.

This sequence belongs to the peptidase C69 family. Secernin subfamily.

The protein is Secernin-2 (scrn2) of Danio rerio (Zebrafish).